Reading from the N-terminus, the 94-residue chain is DASH complex subunit dad2 (94 aa).

Residues lysine 18–glutamate 38 adopt a coiled-coil conformation. Positions valine 72–valine 94 are disordered. The span at proline 76–glutamate 87 shows a compositional bias: polar residues.

Belongs to the DASH complex DAD2 family. As to quaternary structure, component of the DASH complex consisting of ask1, dad1, dad2, dad3, dad4, dam1, duo1, dad5, spc19 and spc34, with a stoichiometry of one copy of each subunit per complex. Multiple DASH complexes oligomerize to form a ring that encircles spindle microtubules and organizes the rod-like NDC80 complexes of the outer kinetochore. DASH complex oligomerization strengthens microtubule attachments. On cytoplasmic microtubules, DASH complexes appear to form patches instead of rings.

Its subcellular location is the nucleus. It localises to the cytoplasm. The protein localises to the cytoskeleton. It is found in the spindle. The protein resides in the chromosome. Its subcellular location is the centromere. It localises to the kinetochore. Functionally, component of the DASH complex that connects microtubules with kinetochores and couples microtubule depolymerisation to chromosome movement; it is involved in retrieving kinetochores to the spindle poles before their re-orientation on the spindle in early mitosis and allows microtubule depolymerization to pull chromosomes apart and resist detachment during anaphase. Kinetochores, consisting of a centromere-associated inner segment and a microtubule-contacting outer segment, play a crucial role in chromosome segregation by mediating the physical connection between centromeric DNA and microtubules. Kinetochores also serve as an input point for the spindle assembly checkpoint, which delays anaphase until all chromosomes have bioriented on the mitotic spindle. The DASH complex mediates bipolar kinetochore-microtubule attachments and facilitates the formation of additional interactions between outer kinetochore components and spindle microtubules. During chromosome movement along the microtubule, it is required both for the sliding of kinetochores along the lateral side of the microtubule and also for microtubule end-on pulling on the kinetochore. Modulates cytoplasmic microtubule dynamics by tracking the plus-end of shortening microtubules and slowing their depolymerization. This is DASH complex subunit dad2 from Schizosaccharomyces pombe (strain 972 / ATCC 24843) (Fission yeast).